Here is a 211-residue protein sequence, read N- to C-terminus: Peptidyl-tRNA hydrolase (211 aa).

Residue Tyr17 coordinates tRNA. The active-site Proton acceptor is the His22. TRNA-binding residues include Phe79, Asn81, and Asn127.

Belongs to the PTH family. Monomer.

The protein resides in the cytoplasm. The enzyme catalyses an N-acyl-L-alpha-aminoacyl-tRNA + H2O = an N-acyl-L-amino acid + a tRNA + H(+). Its function is as follows. Hydrolyzes ribosome-free peptidyl-tRNAs (with 1 or more amino acids incorporated), which drop off the ribosome during protein synthesis, or as a result of ribosome stalling. Functionally, catalyzes the release of premature peptidyl moieties from peptidyl-tRNA molecules trapped in stalled 50S ribosomal subunits, and thus maintains levels of free tRNAs and 50S ribosomes. This chain is Peptidyl-tRNA hydrolase, found in Solidesulfovibrio magneticus (strain ATCC 700980 / DSM 13731 / RS-1) (Desulfovibrio magneticus).